The primary structure comprises 418 residues: Sonic hedgehog protein (418 aa).

A signal peptide spans 1-23 (MRLLTRVLLVSLLTLSLVVSGLA). Cys-24 carries the N-palmitoyl cysteine lipid modification. Positions 32 to 38 (RRRHPKK) match the Cardin-Weintraub motif. Residues Glu-89, Glu-90, Asp-95, Thr-125, Glu-126, Asp-129, and Asp-131 each contribute to the Ca(2+) site. 3 residues coordinate Zn(2+): His-140, Asp-147, and His-182. Gly-197 carries Cholesterol glycine ester lipidation.

Belongs to the hedgehog family. Interacts with HHATL/GUP1 which negatively regulates HHAT-mediated palmitoylation of the SHH N-terminus. Interacts with BOC and CDON. Interacts with HHIP. Interacts with DISP1 via its cholesterol anchor. Interacts with SCUBE2. As to quaternary structure, multimer. In terms of processing, the C-terminal domain displays an autoproteolysis activity and a cholesterol transferase activity. Both activities result in the cleavage of the full-length protein and covalent attachment of a cholesterol moiety to the C-terminal of the newly generated N-terminal fragment (ShhN). Cholesterylation is required for the sonic hedgehog protein N-product targeting to lipid rafts and multimerization. ShhN is the active species in both local and long-range signaling, whereas the C-product (ShhC) is degraded in the reticulum endoplasmic. Post-translationally, N-palmitoylation by HHAT of ShhN is required for sonic hedgehog protein N-product multimerization and full activity. It is a prerequisite for the membrane-proximal positioning and the subsequent shedding of this N-terminal peptide. The lipidated N- and C-terminal peptides of ShhNp can be cleaved (shedding). The N-terminal palmitoylated peptide is cleaved at the Cardin-Weintraub (CW) motif site. The cleavage reduced the interactions with heparan sulfate. The cleavage is enhanced by SCUBE2. In terms of tissue distribution, expressed in the ventral midline of the neural tube and brain. Also found in the notochord and in developing fin bud. In the developing brain, expression occurs in domains that include a discrete region in the floor of the diencephalon.

Its subcellular location is the endoplasmic reticulum membrane. It is found in the golgi apparatus membrane. The protein resides in the cell membrane. It catalyses the reaction glycyl-L-cysteinyl-[protein] + cholesterol + H(+) = [protein]-C-terminal glycyl cholesterol ester + N-terminal L-cysteinyl-[protein]. Its function is as follows. The C-terminal part of the sonic hedgehog protein precursor displays an autoproteolysis and a cholesterol transferase activity. Both activities result in the cleavage of the full-length protein into two parts (ShhN and ShhC) followed by the covalent attachment of a cholesterol moiety to the C-terminal of the newly generated ShhN. Both activities occur in the endoplasmic reticulum. Once cleaved, ShhC is degraded in the endoplasmic reticulum. The dually lipidated sonic hedgehog protein N-product (ShhNp) is a morphogen which is essential for a variety of patterning events during development. Involved in dorso-ventral patterning of the brain and in early patterning of the developing eyes. Binds to the patched (PTCH1) receptor, which functions in association with smoothened (SMO), to activate the transcription of target genes. In the absence of SHH, PTCH1 represses the constitutive signaling activity of SMO. The protein is Sonic hedgehog protein (shha) of Danio rerio (Zebrafish).